The following is a 682-amino-acid chain: Potassium-transporting ATPase ATP-binding subunit (682 aa).

The next 4 membrane-spanning stretches (helical) occupy residues 34-54 (PVMF…IAMA), 62-82 (ALFS…ANFA), 219-239 (IALT…TATL), and 254-274 (VLVA…LSAI). Residue Asp307 is the 4-aspartylphosphate intermediate of the active site. Residues Asp344, Glu348, 377-384 (FTAQSRMS), and Lys395 each bind ATP. Positions 518 and 522 each coordinate Mg(2+). 3 consecutive transmembrane segments (helical) span residues 588-608 (FAII…LNIM), 616-636 (AILS…PLAL), and 656-676 (IYGL…DLLL).

It belongs to the cation transport ATPase (P-type) (TC 3.A.3) family. Type IA subfamily. In terms of assembly, the system is composed of three essential subunits: KdpA, KdpB and KdpC.

It localises to the cell inner membrane. It carries out the reaction K(+)(out) + ATP + H2O = K(+)(in) + ADP + phosphate + H(+). Functionally, part of the high-affinity ATP-driven potassium transport (or Kdp) system, which catalyzes the hydrolysis of ATP coupled with the electrogenic transport of potassium into the cytoplasm. This subunit is responsible for energy coupling to the transport system and for the release of the potassium ions to the cytoplasm. In Escherichia coli (strain UTI89 / UPEC), this protein is Potassium-transporting ATPase ATP-binding subunit.